A 615-amino-acid chain; its full sequence is Melanopsin-B (615 aa).

Over 1–19 (MDMDRGFYRKVDVPDHAHY) the chain is Extracellular. The chain crosses the membrane as a helical span at residues 20-40 (VIAFFVLIIGVVGVTGNALVM). Topologically, residues 41 to 56 (YAFLCNKKLRTPPNYF) are cytoplasmic. A helical transmembrane segment spans residues 57-77 (IMNLAVSDFLMAITQSPIFFI). Over 78–93 (NSLFKEWIFGETGCRM) the chain is Extracellular. Cys-91 and Cys-169 are disulfide-bonded. A helical transmembrane segment spans residues 94 to 114 (YAFCGALFGITSMINLLAISL). Over 115–136 (DRYIVITKPPQAIRWVSGRRTM) the chain is Cytoplasmic. The chain crosses the membrane as a helical span at residues 137-157 (VVILLVWLYSLAWSLAPLLGW). Residues 158–189 (SSYIPEGLMTSCTWDYVTSTPANKGYTLMLCC) lie on the Extracellular side of the membrane. A helical transmembrane segment spans residues 190 to 210 (FVFFIPLGIISYCYLCMFLAI). Residues 211–244 (RSAGREIERLGTQVRKSTLMQQQTIKTEWKLTKV) are Cytoplasmic-facing. Residues 245 to 265 (AFVVIIVYVHSWSPYACVTLI) form a helical membrane-spanning segment. Residues 266–279 (AWAGYGSHLSPYSK) lie on the Extracellular side of the membrane. Residues 280 to 300 (AVPAVIAKASAIYNPFIYAII) traverse the membrane as a helical segment. The residue at position 287 (Lys-287) is an N6-(retinylidene)lysine. Residues 301-615 (HSKYRDTLAE…RNLEESFMAL (315 aa)) lie on the Cytoplasmic side of the membrane. Disordered regions lie at residues 390–420 (LGRSKEHRGPPAQQNRQTRSSDTLEQATVAD) and 465–502 (NKHPNNNHKNHNNRHNGNNNNEEHEYSGKGGRHCQNHP). The segment covering 401–415 (AQQNRQTRSSDTLEQ) has biased composition (polar residues). The span at 469–478 (NNNHKNHNNR) shows a compositional bias: basic residues.

It belongs to the G-protein coupled receptor 1 family. Opsin subfamily. Expressed in the inner nuclear layer of the retina, possibly in amacrine and ganglion cells. Expressed in a subpopulation of neurons in the dorsal habenula.

The protein resides in the cell membrane. Photoreceptor implicated in non-image-forming responses to light. In Gadus morhua (Atlantic cod), this protein is Melanopsin-B (opn4b).